A 226-amino-acid chain; its full sequence is UPF0758 protein GK2618 (226 aa).

An MPN domain is found at 104–226 (VIRCPEDGAK…FISLKEKGYV (123 aa)). Zn(2+) contacts are provided by histidine 175, histidine 177, and aspartate 188. The JAMM motif signature appears at 175–188 (HNHPSGDPTPSRED).

Belongs to the UPF0758 family.

The sequence is that of UPF0758 protein GK2618 from Geobacillus kaustophilus (strain HTA426).